The chain runs to 574 residues: Septation ring formation regulator EzrA (574 aa).

Residues 1-7 (MSSGLIL) lie on the Extracellular side of the membrane. The helical transmembrane segment at 8–26 (LIVAIVLLVIIAYLVGVII) threads the bilayer. Residues 27 to 574 (RKRNDTLITS…YEKTRERIRF (548 aa)) lie on the Cytoplasmic side of the membrane. 4 coiled-coil regions span residues 102 to 131 (NFIRAKHEINSVESQLNLVEEDITAIREAL), 161 to 190 (ENEDNFGSTMAEIEKQMKNIEAEFSQFVAL), 276 to 379 (VTLD…QQEK), and 459 to 493 (QLEALMDELSRGRINIEAVSRLSEVATAAIANLEE).

It belongs to the EzrA family.

Its subcellular location is the cell membrane. Its function is as follows. Negative regulator of FtsZ ring formation; modulates the frequency and position of FtsZ ring formation. Inhibits FtsZ ring formation at polar sites. Interacts either with FtsZ or with one of its binding partners to promote depolymerization. This Streptococcus equi subsp. zooepidemicus (strain MGCS10565) protein is Septation ring formation regulator EzrA.